A 292-amino-acid chain; its full sequence is Glycine--tRNA ligase alpha subunit (292 aa).

The protein belongs to the class-II aminoacyl-tRNA synthetase family. Tetramer of two alpha and two beta subunits.

It localises to the cytoplasm. It carries out the reaction tRNA(Gly) + glycine + ATP = glycyl-tRNA(Gly) + AMP + diphosphate. The protein is Glycine--tRNA ligase alpha subunit of Buchnera aphidicola subsp. Schizaphis graminum (strain Sg).